Reading from the N-terminus, the 575-residue chain is Estrogen receptor beta (575 aa).

Positions 1 to 160 (MSSSLSPTLQ…GAVVKRDMHF (160 aa)) are modulating. A disordered region spans residues 108–151 (DTKPHTSGRHSSFLSRPKLFGKRPEDGDGDEALDDDDPSSSSSG). Residues 134–145 (GDGDEALDDDDP) show a composition bias toward acidic residues. 2 consecutive NR C4-type zinc fingers follow at residues 161 to 181 (CVVCHDYASGYHYGVWSCEGC) and 197 to 221 (CPATNQCTIDKNRRKSCQACRLRKC). The segment at residues 161–226 (CVVCHDYASG…RLRKCYEMGM (66 aa)) is a DNA-binding region (nuclear receptor). The NR LBD domain maps to 290–526 (SPEQLVYCIL…DLLLEMLDAN (237 aa)). A compositionally biased stretch (polar residues) spans 537-549 (VCTDPVTPATSPN). A disordered region spans residues 537 to 557 (VCTDPVTPATSPNTPLPPQLH).

This sequence belongs to the nuclear hormone receptor family. NR3 subfamily. In terms of assembly, binds DNA as a homodimer. Can form a heterodimer with ER-alpha. Ovary and testis.

It is found in the nucleus. In terms of biological role, binds estrogens with an affinity similar to that of ER-alpha, and activates expression of reporter genes containing estrogen response elements (ERE) in an estrogen-dependent manner. The protein is Estrogen receptor beta (esr2) of Ictalurus punctatus (Channel catfish).